A 91-amino-acid polypeptide reads, in one-letter code: Small ribosomal subunit protein uS19 (91 aa).

This sequence belongs to the universal ribosomal protein uS19 family.

In terms of biological role, protein S19 forms a complex with S13 that binds strongly to the 16S ribosomal RNA. This is Small ribosomal subunit protein uS19 from Amoebophilus asiaticus (strain 5a2).